A 342-amino-acid chain; its full sequence is MGGNSTELQKILPALEKVVPVLAPGRHKGQAGKIAVIGGCREYTGAPYFAAISALKMGADLAHVFCTSGAATVIKSYSPELIVHPVLHESYDVGEIGEEEISGLKDKVLAEVGKWLQRFDCIVIGPGLGRDPILLDCVAAIIEEAKFKNIPLVLDGDGLFLVTNQPELIIGYPLAILTPNVMEHKRLVAKIVGERDQNVPQNPEVSNEDLPGQLQDLAKRMEGVTILQKGKTDYISDGKTVLSSDYYGSPRRCGGQGDVLSGSTAVFVSWAKEYFSNENAAGKKEVEERVSNNPTMVGALAGSLLCRKSAANAFAQHKRATTTTNIIEYLGHRLFTFMLRFY.

One can recognise a YjeF C-terminal domain in the interval 11-337 (ILPALEKVVP…EYLGHRLFTF (327 aa)). (6S)-NADPHX-binding positions include G127 and 180–186 (NVMEHKR). Residues 229–233 (KGKTD) and 248–257 (GSPRRCGGQG) contribute to the ATP site. Position 258 (D258) interacts with (6S)-NADPHX.

It belongs to the NnrD/CARKD family. Mg(2+) serves as cofactor.

It carries out the reaction (6S)-NADHX + ATP = ADP + phosphate + NADH + H(+). The enzyme catalyses (6S)-NADPHX + ATP = ADP + phosphate + NADPH + H(+). Catalyzes the dehydration of the S-form of NAD(P)HX at the expense of ATP, which is converted to ADP. Together with NAD(P)HX epimerase, which catalyzes the epimerization of the S- and R-forms, the enzyme allows the repair of both epimers of NAD(P)HX, a damaged form of NAD(P)H that is a result of enzymatic or heat-dependent hydration. This is ATP-dependent (S)-NAD(P)H-hydrate dehydratase from Physcomitrium patens (Spreading-leaved earth moss).